The primary structure comprises 288 residues: DegV domain-containing protein (288 aa).

Residues Ile-3–Gly-282 form the DegV domain. 2 residues coordinate hexadecanoate: Thr-62 and Ser-95.

May bind long-chain fatty acids, such as palmitate, and may play a role in lipid transport or fatty acid metabolism. The chain is DegV domain-containing protein from Staphylococcus aureus.